The following is a 142-amino-acid chain: uncharacterized protein (142 aa).

This sequence belongs to the IIV-3 015R family.

This is an uncharacterized protein from Aedes vexans (Inland floodwater mosquito).